The chain runs to 223 residues: N-terminal Xaa-Pro-Lys N-methyltransferase 1 (223 aa).

N-acetylmethionine is present on methionine 1. Threonine 2 carries the post-translational modification N-acetylthreonine; in N-terminal Xaa-Pro-Lys N-methyltransferase 1, N-terminally processed. S-adenosyl-L-methionine is bound by residues glycine 69, arginine 74, 91–93 (DVT), 119–120 (LQ), and glutamine 135.

Belongs to the methyltransferase superfamily. NTM1 family.

Its subcellular location is the nucleus. It carries out the reaction N-terminal L-alanyl-L-prolyl-L-lysyl-[protein] + 3 S-adenosyl-L-methionine = N-terminal N,N,N-trimethyl-L-alanyl-L-prolyl-L-lysyl-[protein] + 3 S-adenosyl-L-homocysteine + 3 H(+). The catalysed reaction is N-terminal L-seryl-L-prolyl-L-lysyl-[protein] + 3 S-adenosyl-L-methionine = N-terminal N,N,N-trimethyl-L-seryl-L-prolyl-L-lysyl-[protein] + 3 S-adenosyl-L-homocysteine + 3 H(+). It catalyses the reaction N-terminal L-prolyl-L-prolyl-L-lysyl-[protein] + 2 S-adenosyl-L-methionine = N-terminal N,N-dimethyl-L-prolyl-L-prolyl-L-lysyl-[protein] + 2 S-adenosyl-L-homocysteine + 2 H(+). Distributive alpha-N-methyltransferase that methylates the N-terminus of target proteins containing the N-terminal motif [Ala/Gly/Pro/Ser]-Pro-Lys when the initiator Met is cleaved. Specifically catalyzes mono-, di- or tri-methylation of the exposed alpha-amino group of the Ala, Gly or Ser residue in the [Ala/Gly/Ser]-Pro-Lys motif and mono- or di-methylation of Pro in the Pro-Pro-Lys motif. Some of the substrates may be primed by NTMT2-mediated monomethylation. Catalyzes the trimethylation of the N-terminal Gly in CENPA (after removal of Met-1). Responsible for the N-terminal methylation of KLHL31, MYL2, MYL3, RB1, RCC1, RPL23A and SET. Required during mitosis for normal bipolar spindle formation and chromosome segregation via its action on RCC1. This is N-terminal Xaa-Pro-Lys N-methyltransferase 1 (Ntmt1) from Rattus norvegicus (Rat).